Reading from the N-terminus, the 384-residue chain is Iron(3+)-hydroxamate import system permease protein FhuB (384 aa).

Transmembrane regions (helical) follow at residues 58–78 (GAVI…FLSI), 115–135 (TAAA…MQGM), 154–174 (FAVS…LVLW), 176–196 (FAGA…SRGG), 202–222 (LALA…AIAI), 243–263 (WSGV…AFFI), 296–316 (VILT…GLII), 330–350 (WIIP…DIAA), and 357–377 (FETP…FYLA).

It belongs to the binding-protein-dependent transport system permease family. FecCD subfamily. The complex is composed of an ATP-binding protein (FhuC), two transmembrane proteins (FhuB and FhuG) and a solute-binding protein (FhuD or YxeB).

Its subcellular location is the cell membrane. It localises to the membrane raft. Part of the ABC transporter complex FhuBGCD involved in iron(3+)-hydroxamate import. Responsible for the translocation of the substrate across the membrane. This Bacillus subtilis (strain 168) protein is Iron(3+)-hydroxamate import system permease protein FhuB (fhuB).